The sequence spans 437 residues: Sodium/bile acid cotransporter 4 (437 aa).

Over 1-103 (MDGLDNTTRL…PPFWDTPLNH (103 aa)) the chain is Extracellular. N-linked (GlcNAc...) asparagine glycans are attached at residues Asn6, Asn20, and Asn26. Residues 16 to 84 (LLPDNLTLSP…GGVAGQDSST (69 aa)) are disordered. The segment covering 21-50 (LTLSPNASSTSASTLSPLPVTSSPSPGLSL) has biased composition (low complexity). A helical transmembrane segment spans residues 104 to 124 (GLNVFVGAALCITMLGLGCTV). Residues 125–140 (DVNHFGAHVRRPVGAL) are Cytoplasmic-facing. A helical transmembrane segment spans residues 141 to 161 (LAALCQFGFLPLLAFLLALAF). Residues 162–197 (KLDEVAAVAVLLCGCCPGGNLSNLMSLLVDGDMNLS) lie on the Extracellular side of the membrane. N-linked (GlcNAc...) asparagine glycosylation is found at Asn181 and Asn195. Residues 198–218 (IIMTISSTLLALVLMPLCLWI) traverse the membrane as a helical segment. Residues 219–233 (YSRAWINTPLVQLLP) are Cytoplasmic-facing. The chain crosses the membrane as a helical span at residues 234 to 254 (LGAVTLTLCSTLIPIGLGVFI). Topologically, residues 255–267 (RYKYNRVADYIVK) are extracellular. The chain crosses the membrane as a helical span at residues 268-288 (VSLCSLLVTLVVLFIMTGTML). Over 289–291 (GPE) the chain is Cytoplasmic. The chain crosses the membrane as a helical span at residues 292–312 (LLASIPAAVYVVAIFMPLAGY). The Extracellular segment spans residues 313–360 (ASGYGLATLFHLPPNCKRTVCLETGSQNVQLCTAILKLAFPPRFIGSM). A helical membrane pass occupies residues 361–381 (YMFPLLYALFQSAEAGVFVLI). The Cytoplasmic segment spans residues 382–437 (YKMYGSEILHKREALDEDDDTDISYKKLKEEELADTSYGTVGTDDLVLMETTQTSL).

It belongs to the bile acid:sodium symporter (BASS) (TC 2.A.28) family. Activated following N-terminal proteolytic cleavage by thrombin and/or proteases. Mainly expressed in the central nervous system cholinergic neurons. Expressed (at protein level) in motor regions of the spinal cord and rhombencephalon, in mesopontine cholinergic neurons, the medial habenula, cholinergic areas of the forebrain, and the gut myenteric plexus.

Its subcellular location is the cell membrane. Transporter for bile acids. The sequence is that of Sodium/bile acid cotransporter 4 (Slc10a4) from Rattus norvegicus (Rat).